The primary structure comprises 625 residues: Chaperone protein HtpG (625 aa).

The segment at 1-337 (MSTNQETRGF…TNDLPLNVSR (337 aa)) is a; substrate-binding. The segment at 338–554 (EILQENKITA…NDEMTTQMAK (217 aa)) is b. A c region spans residues 555-625 (LFAAMGQKAP…FIKRMNKLLG (71 aa)).

The protein belongs to the heat shock protein 90 family. As to quaternary structure, homodimer.

The protein resides in the cytoplasm. Functionally, molecular chaperone. Has ATPase activity. The protein is Chaperone protein HtpG of Actinobacillus pleuropneumoniae serotype 5b (strain L20).